Here is a 124-residue protein sequence, read N- to C-terminus: Small ribosomal subunit protein uS12 (124 aa).

Aspartate 89 carries the 3-methylthioaspartic acid modification.

This sequence belongs to the universal ribosomal protein uS12 family. As to quaternary structure, part of the 30S ribosomal subunit. Contacts proteins S8 and S17. May interact with IF1 in the 30S initiation complex.

With S4 and S5 plays an important role in translational accuracy. In terms of biological role, interacts with and stabilizes bases of the 16S rRNA that are involved in tRNA selection in the A site and with the mRNA backbone. Located at the interface of the 30S and 50S subunits, it traverses the body of the 30S subunit contacting proteins on the other side and probably holding the rRNA structure together. The combined cluster of proteins S8, S12 and S17 appears to hold together the shoulder and platform of the 30S subunit. The protein is Small ribosomal subunit protein uS12 (rpsL) of Mannheimia haemolytica (Pasteurella haemolytica).